Consider the following 542-residue polypeptide: Phosphoacetylglucosamine mutase (542 aa).

Methionine 1 carries the post-translational modification N-acetylmethionine. The residue at position 62 (threonine 62) is a Phosphothreonine. Catalysis depends on serine 64, which acts as the Phosphoserine intermediate. 4 residues coordinate Mg(2+): serine 64, aspartate 276, aspartate 278, and aspartate 280. A Phosphoserine modification is found at serine 64. Substrate-binding positions include 370–372 (EAN), 496–500 (RPSGT), and arginine 505.

This sequence belongs to the phosphohexose mutase family. Requires Mg(2+) as cofactor.

The enzyme catalyses N-acetyl-alpha-D-glucosamine 1-phosphate = N-acetyl-D-glucosamine 6-phosphate. It participates in nucleotide-sugar biosynthesis; UDP-N-acetyl-alpha-D-glucosamine biosynthesis; N-acetyl-alpha-D-glucosamine 1-phosphate from alpha-D-glucosamine 6-phosphate (route I): step 2/2. Its function is as follows. Catalyzes the conversion of GlcNAc-6-P into GlcNAc-1-P during the synthesis of uridine diphosphate/UDP-GlcNAc, a sugar nucleotide critical to multiple glycosylation pathways including protein N- and O-glycosylation. This is Phosphoacetylglucosamine mutase from Mus musculus (Mouse).